We begin with the raw amino-acid sequence, 275 residues long: Tryptophan synthase alpha chain (275 aa).

Residue E51 is the Proton acceptor of the active site.

The protein belongs to the TrpA family. As to quaternary structure, tetramer of two alpha and two beta chains.

It carries out the reaction (1S,2R)-1-C-(indol-3-yl)glycerol 3-phosphate + L-serine = D-glyceraldehyde 3-phosphate + L-tryptophan + H2O. The protein operates within amino-acid biosynthesis; L-tryptophan biosynthesis; L-tryptophan from chorismate: step 5/5. The alpha subunit is responsible for the aldol cleavage of indoleglycerol phosphate to indole and glyceraldehyde 3-phosphate. The sequence is that of Tryptophan synthase alpha chain from Caulobacter vibrioides (strain ATCC 19089 / CIP 103742 / CB 15) (Caulobacter crescentus).